A 76-amino-acid chain; its full sequence is Small ribosomal subunit protein bS18 (76 aa).

It belongs to the bacterial ribosomal protein bS18 family. Part of the 30S ribosomal subunit. Forms a tight heterodimer with protein bS6.

Binds as a heterodimer with protein bS6 to the central domain of the 16S rRNA, where it helps stabilize the platform of the 30S subunit. The protein is Small ribosomal subunit protein bS18 of Pseudomonas entomophila (strain L48).